Reading from the N-terminus, the 199-residue chain is NADH-quinone oxidoreductase subunit C (199 aa).

This sequence belongs to the complex I 30 kDa subunit family. As to quaternary structure, NDH-1 is composed of 14 different subunits. Subunits NuoB, C, D, E, F, and G constitute the peripheral sector of the complex.

The protein localises to the cell inner membrane. The catalysed reaction is a quinone + NADH + 5 H(+)(in) = a quinol + NAD(+) + 4 H(+)(out). Its function is as follows. NDH-1 shuttles electrons from NADH, via FMN and iron-sulfur (Fe-S) centers, to quinones in the respiratory chain. The immediate electron acceptor for the enzyme in this species is believed to be ubiquinone. Couples the redox reaction to proton translocation (for every two electrons transferred, four hydrogen ions are translocated across the cytoplasmic membrane), and thus conserves the redox energy in a proton gradient. The protein is NADH-quinone oxidoreductase subunit C of Cupriavidus metallidurans (strain ATCC 43123 / DSM 2839 / NBRC 102507 / CH34) (Ralstonia metallidurans).